A 103-amino-acid chain; its full sequence is G0/G1 switch protein 2 (103 aa).

In terms of assembly, directly interacts with BCL2; this interaction prevents the formation of the anti-apoptotic BAX-BCL2 complex.

It is found in the mitochondrion. Its function is as follows. Promotes apoptosis by binding to BCL2, hence preventing the formation of protective BCL2-BAX heterodimers. This is G0/G1 switch protein 2 (G0s2) from Rattus norvegicus (Rat).